Reading from the N-terminus, the 264-residue chain is S-adenosylmethionine decarboxylase proenzyme (264 aa).

Catalysis depends on Ser-113, which acts as the Schiff-base intermediate with substrate; via pyruvic acid. Ser-113 carries the post-translational modification Pyruvic acid (Ser); by autocatalysis. Residue His-118 is the Proton acceptor; for processing activity of the active site. Cys-141 acts as the Proton donor; for catalytic activity in catalysis.

It belongs to the prokaryotic AdoMetDC family. Type 2 subfamily. As to quaternary structure, heterooctamer of four alpha and four beta chains arranged as a tetramer of alpha/beta heterodimers. Pyruvate serves as cofactor. Post-translationally, is synthesized initially as an inactive proenzyme. Formation of the active enzyme involves a self-maturation process in which the active site pyruvoyl group is generated from an internal serine residue via an autocatalytic post-translational modification. Two non-identical subunits are generated from the proenzyme in this reaction, and the pyruvate is formed at the N-terminus of the alpha chain, which is derived from the carboxyl end of the proenzyme. The post-translation cleavage follows an unusual pathway, termed non-hydrolytic serinolysis, in which the side chain hydroxyl group of the serine supplies its oxygen atom to form the C-terminus of the beta chain, while the remainder of the serine residue undergoes an oxidative deamination to produce ammonia and the pyruvoyl group blocking the N-terminus of the alpha chain.

The catalysed reaction is S-adenosyl-L-methionine + H(+) = S-adenosyl 3-(methylsulfanyl)propylamine + CO2. It functions in the pathway amine and polyamine biosynthesis; S-adenosylmethioninamine biosynthesis; S-adenosylmethioninamine from S-adenosyl-L-methionine: step 1/1. In terms of biological role, catalyzes the decarboxylation of S-adenosylmethionine to S-adenosylmethioninamine (dcAdoMet), the propylamine donor required for the synthesis of the polyamines spermine and spermidine from the diamine putrescine. The sequence is that of S-adenosylmethionine decarboxylase proenzyme from Xylella fastidiosa (strain Temecula1 / ATCC 700964).